The primary structure comprises 953 residues: Mannosylglycoprotein endo-beta-mannosidase (953 aa).

The active-site Proton donor is the Glu461. Glu553 acts as the Nucleophile in catalysis.

The protein belongs to the glycosyl hydrolase 2 family. As to quaternary structure, heterotrimer of 31 kDa, 28 kDa and 42 kDa subunits. In terms of processing, the mature enzyme is proteotically cleaved into 3 subunits of 31 kDa, 28 kDa and 42 kDa. In terms of tissue distribution, ubiquitously expressed.

The enzyme catalyses Hydrolysis of the alpha-D-mannosyl-(1-&gt;6)-beta-D-mannosyl-(1-&gt;4)-N-acetyl-beta-D-glucosaminyl-(1-&gt;4)-N-acetyl-beta-D-glucosaminyl sequence of glycoprotein to alpha-D-mannosyl-(1-&gt;6)-D-mannose and N-acetyl-beta-D-glucosaminyl-(1-&gt;4)-N-acetyl-beta-D-glucosaminyl sequences.. In terms of biological role, glycosidase that specifically hydrolyzes the Man-beta-1,4-GlcNAc linkage in the trimannosyl core structure of N-glycans. Does not hydrolyzes pyridylamino derivatives sugar chains containing Man-alpha-1,3-Man-beta or Xylose-beta-1,2-Man-beta. The protein is Mannosylglycoprotein endo-beta-mannosidase (EBM) of Lilium longiflorum (Trumpet lily).